We begin with the raw amino-acid sequence, 221 residues long: Small ribosomal subunit protein uS5 (221 aa).

Positions 46–109 constitute an S5 DRBM domain; that stretch reads LKDEVIDIKR…INAKLNIMEI (64 aa).

It belongs to the universal ribosomal protein uS5 family. As to quaternary structure, part of the 30S ribosomal subunit. Contacts protein S4.

In terms of biological role, with S4 and S12 plays an important role in translational accuracy. The protein is Small ribosomal subunit protein uS5 of Thermoplasma acidophilum (strain ATCC 25905 / DSM 1728 / JCM 9062 / NBRC 15155 / AMRC-C165).